Reading from the N-terminus, the 314-residue chain is MSGLTVVFAGTPEFGLSCLDALIQSRHHLKAVYTQPDRPAGRGRKLQESPVKEWAINNQVPVYQPLNFKNQEAIDELSALKPDVMVVIAYGLILPKAVLEIPRLGCINVHASLLPRWRGASPIQHAILHGDAESGVTIMQMDVGLDTGPMLCKATCPVTSSDTAGSLHDKLAKMSVKPLLDVLEALASNSAQFELQNNELATYAGKINKEEARINWHQSAVEIDRKIRAFNPWPVAYTLAEELMLRIHQAKATDIMSTEMPGMVLNIDKNGMLVATNDNALLVEKIQFPGAKVISVRDWLNSGKTQLHTGLMLQ.

(6S)-5,6,7,8-tetrahydrofolate is bound at residue 112–115 (SLLP).

Belongs to the Fmt family.

It catalyses the reaction L-methionyl-tRNA(fMet) + (6R)-10-formyltetrahydrofolate = N-formyl-L-methionyl-tRNA(fMet) + (6S)-5,6,7,8-tetrahydrofolate + H(+). Attaches a formyl group to the free amino group of methionyl-tRNA(fMet). The formyl group appears to play a dual role in the initiator identity of N-formylmethionyl-tRNA by promoting its recognition by IF2 and preventing the misappropriation of this tRNA by the elongation apparatus. This Legionella pneumophila (strain Corby) protein is Methionyl-tRNA formyltransferase.